The primary structure comprises 312 residues: Malate dehydrogenase (312 aa).

NAD(+) is bound by residues 7 to 13 (GAAGGIG) and Asp34. Substrate contacts are provided by Arg81 and Arg87. NAD(+) is bound by residues Asn94 and 117–119 (ITN). Residues Asn119 and Arg153 each coordinate substrate. The Proton acceptor role is filled by His177. Met227 serves as a coordination point for NAD(+).

Belongs to the LDH/MDH superfamily. MDH type 1 family. Homodimer.

It carries out the reaction (S)-malate + NAD(+) = oxaloacetate + NADH + H(+). In terms of biological role, catalyzes the reversible oxidation of malate to oxaloacetate. The protein is Malate dehydrogenase of Escherichia coli O7:K1 (strain IAI39 / ExPEC).